Here is a 539-residue protein sequence, read N- to C-terminus: Ell-associated factor Eaf (539 aa).

Positions 119–539 (TRSEMTHHKP…SSNSSDDDDD (421 aa)) are disordered. Residues 132–146 (PATNINHNNIPMSTN) are compositionally biased toward polar residues. Over residues 151-163 (GPGPGPGSGPSPP) the composition is skewed to pro residues. The span at 174 to 195 (KLENSTMRISSKTKVSTGSRRN) shows a compositional bias: polar residues. Serine 205 is subject to Phosphoserine. Residues 220-238 (RSPQSAPAWNANNAQQTLP) are compositionally biased toward polar residues. 3 stretches are compositionally biased toward low complexity: residues 267 to 278 (SGSSTGSSTGQP), 309 to 337 (MHQNHQQHPSPPMHQQQQQQQQQQHYGRG), and 345 to 375 (NNYAQQQQPQQHHQQQEQQRPSSSSTYSHHS). Over residues 420–435 (DSSDSDSGSESDDSTD) the composition is skewed to acidic residues. 2 stretches are compositionally biased toward low complexity: residues 461–493 (HQQLQQQPPQQQQQQQQQQQYNHHMQQQHQPQQ) and 520–533 (NDLLQNDLQLSSNS).

The protein belongs to the EAF family.

Its subcellular location is the nucleus. In terms of biological role, promotes transcriptional elongation by Su(Tpl)/ELL. Essential for development. The sequence is that of Ell-associated factor Eaf from Drosophila willistoni (Fruit fly).